The primary structure comprises 512 residues: Chitin synthase regulatory factor 2 (512 aa).

Sel1-like repeat units lie at residues 224-260 (SEAL…DLNH), 261-296 (VQAA…SGQH), 297-333 (VGAM…LEAD), 337-377 (PQAL…KYGL), 378-414 (KDAQ…RKRN), and 415-452 (PEAM…YKNH). C509 carries the post-translational modification Cysteine methyl ester. The S-farnesyl cysteine moiety is linked to residue C509. A propeptide spans 510–512 (IIS) (removed in mature form).

It is found in the membrane. In terms of biological role, involved in chitin biosynthesis. The protein is Chitin synthase regulatory factor 2 (chr2) of Schizosaccharomyces pombe (strain 972 / ATCC 24843) (Fission yeast).